The sequence spans 63 residues: Small ribosomal subunit protein eS27 (63 aa).

4 residues coordinate Zn(2+): Cys-18, Cys-21, Cys-37, and Cys-40. A C4-type zinc finger spans residues 18-40; that stretch reads CIDCGNEQIVFSHPATKVRCLIC.

Belongs to the eukaryotic ribosomal protein eS27 family. In terms of assembly, part of the 30S ribosomal subunit. Requires Zn(2+) as cofactor.

The polypeptide is Small ribosomal subunit protein eS27 (Pyrococcus furiosus (strain ATCC 43587 / DSM 3638 / JCM 8422 / Vc1)).